Here is a 122-residue protein sequence, read N- to C-terminus: Large ribosomal subunit protein uL14 (122 aa).

Belongs to the universal ribosomal protein uL14 family. In terms of assembly, part of the 50S ribosomal subunit. Forms a cluster with proteins L3 and L19. In the 70S ribosome, L14 and L19 interact and together make contacts with the 16S rRNA in bridges B5 and B8.

Its function is as follows. Binds to 23S rRNA. Forms part of two intersubunit bridges in the 70S ribosome. The sequence is that of Large ribosomal subunit protein uL14 from Cellvibrio japonicus (strain Ueda107) (Pseudomonas fluorescens subsp. cellulosa).